We begin with the raw amino-acid sequence, 318 residues long: Polyprenal reductase (318 aa).

Residues 1-11 (MAPWAEAEHSA) lie on the Cytoplasmic side of the membrane. Residues 12–34 (LNPLRAVWLTLTAAFLLTLLLQL) traverse the membrane as a helical segment. Residues 35 to 80 (LPPGLLPGCAIFQDLIRYGKTKCGEPSRPAACRAFDVPKRYFSHFY) lie on the Lumenal side of the membrane. A helical transmembrane segment spans residues 81 to 101 (IISVLWNGFLLWCLTQSLFLG). The Cytoplasmic portion of the chain corresponds to 102–117 (APFPSWLHGLLRILGA). The helical transmembrane segment at 118 to 138 (AQFQGGELALSAFLVLVFLWL) threads the bilayer. Residues 139-157 (HSLRRLFECLYVSVFSNVM) lie on the Lumenal side of the membrane. Residues 158-178 (IHVVQYCFGLVYYVLVGLTVL) traverse the membrane as a helical segment. The Cytoplasmic portion of the chain corresponds to 179-194 (SQVPMDGRNAYITGKN). A helical transmembrane segment spans residues 195–215 (LLMQARWFHILGMMMFIWSSA). Residues 216-260 (HQYKCHVILGNLRKNKAGVVIHCNHRIPFGDWFEYVSSPNYLAEL) lie on the Lumenal side of the membrane. A helical membrane pass occupies residues 261–281 (MIYVSMAVTFGFHNLTWWLVV). The Cytoplasmic portion of the chain corresponds to 282–318 (TNVFFNQALSAFLSHQFYKSKFVSYPKHRKAFLPFLF).

It belongs to the steroid 5-alpha reductase family. Polyprenal reductase subfamily. As to expression, expressed in preadipocytes (at protein level). Overexpressed in hormone-refractory prostate cancers (HRPC). Almost no or little expression in normal adult organs.

The protein resides in the endoplasmic reticulum membrane. The catalysed reaction is a di-trans,poly-cis-dolichal + NADP(+) = a di-trans,poly-cis-polyprenal + NADPH + H(+). It carries out the reaction a 3-oxo-5alpha-steroid + NADP(+) = a 3-oxo-Delta(4)-steroid + NADPH + H(+). The enzyme catalyses androst-4-ene-3,17-dione + NADPH + H(+) = 5alpha-androstan-3,17-dione + NADP(+). It catalyses the reaction 17beta-hydroxy-5alpha-androstan-3-one + NADP(+) = testosterone + NADPH + H(+). The protein operates within protein modification; protein glycosylation. Functionally, plays a key role in early steps of protein N-linked glycosylation by being involved in the conversion of polyprenol into dolichol. Acts as a polyprenal reductase that mediates the reduction of polyprenal into dolichal in a NADP-dependent mechanism. Dolichols are required for the synthesis of dolichol-linked monosaccharides and the oligosaccharide precursor used for N-glycosylation. Also able to convert testosterone (T) into 5-alpha-dihydrotestosterone (DHT). This Homo sapiens (Human) protein is Polyprenal reductase.